We begin with the raw amino-acid sequence, 165 residues long: MISVATAECFTHGKIGTKIHKIACGYKEFEKDSNYDMIHGNVYVMASMFLPSKKGIESLLDVNLPKPDYVFKYSKAYNQENDILVAKLVAKALKNKLNCNIAISSTAGIGNGAVCIVTDYNDYVFSSDIYGDLLKGQNIIKRQESGIEKAYNTFIDILKKEYNLK.

This sequence belongs to the UPF0254 family.

The sequence is that of UPF0254 protein MMP0935 from Methanococcus maripaludis (strain DSM 14266 / JCM 13030 / NBRC 101832 / S2 / LL).